A 227-amino-acid polypeptide reads, in one-letter code: Small ribosomal subunit protein uS3 (227 aa).

Residues 39–108 (IRKFVEERYK…DVTVNVDEVK (70 aa)) form the KH type-2 domain.

Belongs to the universal ribosomal protein uS3 family. As to quaternary structure, part of the 30S ribosomal subunit. Forms a tight complex with proteins S10 and S14.

Functionally, binds the lower part of the 30S subunit head. Binds mRNA in the 70S ribosome, positioning it for translation. In Persephonella marina (strain DSM 14350 / EX-H1), this protein is Small ribosomal subunit protein uS3.